Reading from the N-terminus, the 1139-residue chain is DNA-directed RNA polymerase subunit beta (1139 aa).

The interval 1085–1139 (ADTSNRHTPSRPTYESVTSEDLSPSPAFTRVLRTADANASRSLEEDEDEEEEEDF) is disordered. The segment covering 1086 to 1106 (DTSNRHTPSRPTYESVTSEDL) has biased composition (polar residues). Positions 1128-1139 (EEDEDEEEEEDF) are enriched in acidic residues.

This sequence belongs to the RNA polymerase beta chain family. In cyanobacteria the RNAP catalytic core is composed of 2 alpha, 1 beta, 1 beta', 1 gamma and 1 omega subunit. When a sigma factor is associated with the core the holoenzyme is formed, which can initiate transcription.

The enzyme catalyses RNA(n) + a ribonucleoside 5'-triphosphate = RNA(n+1) + diphosphate. In terms of biological role, DNA-dependent RNA polymerase catalyzes the transcription of DNA into RNA using the four ribonucleoside triphosphates as substrates. The protein is DNA-directed RNA polymerase subunit beta of Synechococcus sp. (strain JA-2-3B'a(2-13)) (Cyanobacteria bacterium Yellowstone B-Prime).